The chain runs to 332 residues: 2,3-diketo-L-gulonate reductase (332 aa).

His-44 (proton donor) is an active-site residue. NAD(+)-binding positions include 168–174, 224–225, and 304–306; these read ITMVDMS, WK, and GHE.

It belongs to the LDH2/MDH2 oxidoreductase family. DlgD subfamily. In terms of assembly, homodimer.

The protein resides in the cytoplasm. It catalyses the reaction 3-dehydro-L-gulonate + NAD(+) = 2,3-dioxo-L-gulonate + NADH + H(+). It carries out the reaction 3-dehydro-L-gulonate + NADP(+) = 2,3-dioxo-L-gulonate + NADPH + H(+). Its function is as follows. Catalyzes the reduction of 2,3-diketo-L-gulonate in the presence of NADH, to form 3-keto-L-gulonate. The protein is 2,3-diketo-L-gulonate reductase of Escherichia fergusonii (strain ATCC 35469 / DSM 13698 / CCUG 18766 / IAM 14443 / JCM 21226 / LMG 7866 / NBRC 102419 / NCTC 12128 / CDC 0568-73).